Reading from the N-terminus, the 209-residue chain is Mitochondrial import inner membrane translocase subunit Tim23 (209 aa).

The next 3 helical transmembrane spans lie at 73-93, 125-145, and 181-197; these read FELA…FGAM, ALWA…GVII, and GLAG…YNNW.

This sequence belongs to the Tim17/Tim22/Tim23 family. Component of the TIM23 complex at least composed of TIMM23, TIMM17 (TIMM17A or TIMM17B) and TIMM50; within this complex, directly interacts with TIMM50. The complex interacts with the TIMM44 component of the PAM complex and with DNAJC15. Upon mitochondrial depolarization, interacts with PINK1; the interaction is required for PINK1 accumulation at the outer mitochondrial membrane, kinase activation by autophosphorylation and PRKN recruitement to mitochondria.

The protein localises to the mitochondrion inner membrane. Functionally, essential component of the TIM23 complex, a complex that mediates the translocation of transit peptide-containing proteins across the mitochondrial inner membrane. Has a role in the activation of stress-induced mitophagy by protecting PINK1 from OMA1-mediated degradation and facilitating its accumulation at the outer mitochondrial membrane in response to depolarization. This is Mitochondrial import inner membrane translocase subunit Tim23 (Timm23) from Mus musculus (Mouse).